Here is a 175-residue protein sequence, read N- to C-terminus: uncharacterized protein (175 aa).

The N-terminal stretch at 1-33 is a signal peptide; the sequence is MERLPYEIVSTIFRKAILHYVLIRGTTYPQSLA.

This is an uncharacterized protein from Methanocaldococcus jannaschii (strain ATCC 43067 / DSM 2661 / JAL-1 / JCM 10045 / NBRC 100440) (Methanococcus jannaschii).